A 137-amino-acid chain; its full sequence is Protein PsiE homolog (137 aa).

4 helical membrane-spanning segments follow: residues 13–35 (ILLRITLNLALIMVGFTLVAFLI), 55–77 (YYMTQDILTFFLYFEFIALIVKY), 84–103 (FPLRYFIYIGITAIIRFIIV), and 107–129 (SATSTLILSGAILLLVAALFLAN).

Belongs to the PsiE family.

It is found in the cell membrane. This chain is Protein PsiE homolog, found in Listeria monocytogenes serotype 4b (strain F2365).